A 444-amino-acid chain; its full sequence is Ribosomal protein uS12 methylthiotransferase RimO (444 aa).

The 115-residue stretch at 4–118 folds into the MTTase N-terminal domain; that stretch reads YKIGLISLGC…IQNYIDDFFN (115 aa). The [4Fe-4S] cluster site is built by cysteine 13, cysteine 48, cysteine 81, cysteine 155, cysteine 159, and cysteine 162. The region spanning 141–371 is the Radical SAM core domain; sequence TTAKHMAYIR…MSIQQNVSSK (231 aa). One can recognise a TRAM domain in the interval 374–440; the sequence is KNKLEKVYKV…EYDLIGVVCD (67 aa).

This sequence belongs to the methylthiotransferase family. RimO subfamily. Requires [4Fe-4S] cluster as cofactor.

It localises to the cytoplasm. It carries out the reaction L-aspartate(89)-[ribosomal protein uS12]-hydrogen + (sulfur carrier)-SH + AH2 + 2 S-adenosyl-L-methionine = 3-methylsulfanyl-L-aspartate(89)-[ribosomal protein uS12]-hydrogen + (sulfur carrier)-H + 5'-deoxyadenosine + L-methionine + A + S-adenosyl-L-homocysteine + 2 H(+). Its function is as follows. Catalyzes the methylthiolation of an aspartic acid residue of ribosomal protein uS12. In Clostridium novyi (strain NT), this protein is Ribosomal protein uS12 methylthiotransferase RimO.